A 356-amino-acid chain; its full sequence is Ubiquitin-conjugating enzyme E2 Z (356 aa).

Over residues 1–16 (MAESPTEEAATATAGA) the composition is skewed to low complexity. Residues 1–22 (MAESPTEEAATATAGAGAAGPG) are disordered. Residues 101 to 255 (QCLLRIKRDI…IRHETIRVAV (155 aa)) enclose the UBC core domain. Cys-190 acts as the Glycyl thioester intermediate in catalysis. The tract at residues 334–356 (NAEMDSDSSSSGTETDLHGSLRV) is disordered. At Ser-339 the chain carries Phosphoserine.

The protein belongs to the ubiquitin-conjugating enzyme family.

The protein localises to the cytoplasm. It localises to the nucleus. It carries out the reaction S-ubiquitinyl-[E1 ubiquitin-activating enzyme]-L-cysteine + [E2 ubiquitin-conjugating enzyme]-L-cysteine = [E1 ubiquitin-activating enzyme]-L-cysteine + S-ubiquitinyl-[E2 ubiquitin-conjugating enzyme]-L-cysteine.. Its pathway is protein modification; protein ubiquitination. In terms of biological role, catalyzes the covalent attachment of ubiquitin to other proteins. Specific substrate for UBA6, not charged with ubiquitin by UBE1. May be involved in apoptosis regulation. In Rattus norvegicus (Rat), this protein is Ubiquitin-conjugating enzyme E2 Z (Ube2z).